The sequence spans 718 residues: Catalase-peroxidase (718 aa).

Positions 98 to 219 (WHAAGTYRMG…LAATEMGLIY (122 aa)) form a cross-link, tryptophyl-tyrosyl-methioninium (Trp-Tyr) (with M-245). His-99 functions as the Proton acceptor in the catalytic mechanism. Positions 219 to 245 (YVNPEGPQASGDPRSAAPFIRATFGNM) form a cross-link, tryptophyl-tyrosyl-methioninium (Tyr-Met) (with W-98). A heme b-binding site is contributed by His-260.

Belongs to the peroxidase family. Peroxidase/catalase subfamily. In terms of assembly, homodimer or homotetramer. Requires heme b as cofactor. Formation of the three residue Trp-Tyr-Met cross-link is important for the catalase, but not the peroxidase activity of the enzyme.

It catalyses the reaction H2O2 + AH2 = A + 2 H2O. The catalysed reaction is 2 H2O2 = O2 + 2 H2O. Bifunctional enzyme with both catalase and broad-spectrum peroxidase activity. This is Catalase-peroxidase from Acinetobacter baumannii (strain AB307-0294).